Here is a 258-residue protein sequence, read N- to C-terminus: Protein CHAPERONE-LIKE PROTEIN OF POR1, chloroplastic (258 aa).

The N-terminal 48 residues, 1 to 48 (MSSSLLLSGSTVSSSFIAPSKPSLVRNSSKTSLLPFRNVSRSFKTVKC), are a transit peptide targeting the chloroplast. Position 49 is an N-acetylthreonine (Thr-49). The tract at residues 67-122 (WDPYKRLGVSPYASEEEIWASRNFLLQQYAGHERSEESIEGAFEKLLMSSFIRRKK) is J-like domain required for holdase chaperone activity. Transmembrane regions (helical) follow at residues 162 to 182 (FLFA…GPAF), 207 to 227 (LIGI…IPMI), and 237 to 257 (TLEL…CTFL).

It belongs to the chaperone-like protein of POR1 protein family. Interacts with PORB in chloroplast. Interacts with PORA during plastid import. Expressed ubiquitously with higher levels in young leaves, flowers, and the root elongation zone.

It is found in the mitochondrion membrane. It localises to the plastid. Its subcellular location is the chloroplast envelope. The protein resides in the chloroplast thylakoid membrane. In terms of biological role, essential protein required during embryogenesis. Exhibits holdase chaperone activity involved in the stabilization of NADPH:protochlorophyllide oxidoreductase (POR) proteins against photooxidative stress during POR proteins import into chloroplasts. Required for chloroplast biogenesis and development. When expressed in yeast, triggers mitochondria-mediated cell death associated with the loss of mitochondrial membrane potential. The sequence is that of Protein CHAPERONE-LIKE PROTEIN OF POR1, chloroplastic from Arabidopsis thaliana (Mouse-ear cress).